The following is a 359-amino-acid chain: Gene 58 protein (359 aa).

11 helical membrane-spanning segments follow: residues 12–32, 45–65, 75–95, 103–123, 132–152, 154–174, 220–240, 246–266, 271–289, 296–318, and 330–350; these read TMAA…CFLF, VDEL…FFCF, YLDL…ICLQ, YLPI…PVTF, YANA…YLLL, FGSV…IAGL, LCVV…AGVY, VLKT…GMGY, ATFV…VFVL, SVLF…TIML, and IVLS…NVLY.

It belongs to the herpesviridae BMRF2 family.

It is found in the host membrane. The protein is Gene 58 protein (58) of Equine herpesvirus 2 (strain 86/87) (EHV-2).